The chain runs to 121 residues: Replication protein A 14 kDa subunit (121 aa).

Val-2 carries the N-acetylvaline modification. Residues Lys-23, Lys-39, and Lys-88 each participate in a glycyl lysine isopeptide (Lys-Gly) (interchain with G-Cter in ubiquitin) cross-link.

It belongs to the replication factor A protein 3 family. As to quaternary structure, component of the canonical replication protein A complex (RPA), a heterotrimer composed of RPA1, RPA2 and RPA3. Also a component of the aRPA, the alternative replication protein A complex, a trimeric complex similar to the replication protein A complex/RPA but where RPA1 and RPA3 are associated with RPA4 instead of RPA2. Interacts with BRIP1/FANCJ via the RPA1 subunit; following DNA damage they colocalize in foci in the nucleus. Post-translationally, ubiquitinated by RFWD3 at stalled replication forks in response to DNA damage: ubiquitination by RFWD3 does not lead to degradation by the proteasome and promotes removal of the RPA complex from stalled replication forks, promoting homologous recombination.

The protein resides in the nucleus. In terms of biological role, as part of the heterotrimeric replication protein A complex (RPA/RP-A), binds and stabilizes single-stranded DNA intermediates that form during DNA replication or upon DNA stress. It prevents their reannealing and in parallel, recruits and activates different proteins and complexes involved in DNA metabolism. Thereby, it plays an essential role both in DNA replication and the cellular response to DNA damage. In the cellular response to DNA damage, the RPA complex controls DNA repair and DNA damage checkpoint activation. Through recruitment of ATRIP activates the ATR kinase a master regulator of the DNA damage response. It is required for the recruitment of the DNA double-strand break repair factors RAD51 and RAD52 to chromatin, in response to DNA damage. Also recruits to sites of DNA damage proteins like XPA and XPG that are involved in nucleotide excision repair and is required for this mechanism of DNA repair. Also plays a role in base excision repair (BER), probably through interaction with UNG. RPA stimulates 5'-3' helicase activity of BRIP1/FANCJ. Also recruits SMARCAL1/HARP, which is involved in replication fork restart, to sites of DNA damage. May also play a role in telomere maintenance. RPA3 has its own single-stranded DNA-binding activity and may be responsible for polarity of the binding of the complex to DNA. As part of the alternative replication protein A complex, aRPA, binds single-stranded DNA and probably plays a role in DNA repair. Compared to the RPA2-containing, canonical RPA complex, may not support chromosomal DNA replication and cell cycle progression through S-phase. The aRPA may not promote efficient priming by DNA polymerase alpha but could support DNA synthesis by polymerase delta in presence of PCNA and replication factor C (RFC), the dual incision/excision reaction of nucleotide excision repair and RAD51-dependent strand exchange. The protein is Replication protein A 14 kDa subunit (RPA3) of Homo sapiens (Human).